Consider the following 342-residue polypeptide: D-erythrose-4-phosphate dehydrogenase (342 aa).

11-12 (RV) lines the NAD(+) pocket. Substrate contacts are provided by residues 153–155 (SCT), arginine 199, 212–213 (TK), and arginine 235. Cysteine 154 acts as the Nucleophile in catalysis. An NAD(+)-binding site is contributed by asparagine 317.

The protein belongs to the glyceraldehyde-3-phosphate dehydrogenase family. Epd subfamily. As to quaternary structure, homotetramer.

It localises to the cytoplasm. It carries out the reaction D-erythrose 4-phosphate + NAD(+) + H2O = 4-phospho-D-erythronate + NADH + 2 H(+). It functions in the pathway cofactor biosynthesis; pyridoxine 5'-phosphate biosynthesis; pyridoxine 5'-phosphate from D-erythrose 4-phosphate: step 1/5. Functionally, catalyzes the NAD-dependent conversion of D-erythrose 4-phosphate to 4-phosphoerythronate. This Pseudoalteromonas atlantica (strain T6c / ATCC BAA-1087) protein is D-erythrose-4-phosphate dehydrogenase.